The chain runs to 888 residues: DNA mismatch repair protein MutS (888 aa).

641–648 (GPNMAGKS) contacts ATP.

This sequence belongs to the DNA mismatch repair MutS family.

This protein is involved in the repair of mismatches in DNA. It is possible that it carries out the mismatch recognition step. This protein has a weak ATPase activity. This chain is DNA mismatch repair protein MutS, found in Rickettsia bellii (strain OSU 85-389).